A 253-amino-acid chain; its full sequence is Phosphoribosylaminoimidazole-succinocarboxamide synthase (253 aa).

The protein belongs to the SAICAR synthetase family.

The catalysed reaction is 5-amino-1-(5-phospho-D-ribosyl)imidazole-4-carboxylate + L-aspartate + ATP = (2S)-2-[5-amino-1-(5-phospho-beta-D-ribosyl)imidazole-4-carboxamido]succinate + ADP + phosphate + 2 H(+). Its pathway is purine metabolism; IMP biosynthesis via de novo pathway; 5-amino-1-(5-phospho-D-ribosyl)imidazole-4-carboxamide from 5-amino-1-(5-phospho-D-ribosyl)imidazole-4-carboxylate: step 1/2. The protein is Phosphoribosylaminoimidazole-succinocarboxamide synthase of Jannaschia sp. (strain CCS1).